Consider the following 81-residue polypeptide: Large ribosomal subunit protein bL31 (81 aa).

Belongs to the bacterial ribosomal protein bL31 family. Type A subfamily. In terms of assembly, part of the 50S ribosomal subunit.

In terms of biological role, binds the 23S rRNA. This Fusobacterium nucleatum subsp. nucleatum (strain ATCC 25586 / DSM 15643 / BCRC 10681 / CIP 101130 / JCM 8532 / KCTC 2640 / LMG 13131 / VPI 4355) protein is Large ribosomal subunit protein bL31 (rpmE).